A 426-amino-acid chain; its full sequence is DNA primase DnaG (426 aa).

The Toprim domain occupies 171–245; the sequence is DTVILVEGRA…KVDFVARAPP (75 aa). Residues glutamate 177, aspartate 219, and aspartate 221 each coordinate Mg(2+). A disordered region spans residues 407-426; the sequence is KSEENIQESVSTGESAQTSP. The span at 413 to 426 shows a compositional bias: polar residues; it reads QESVSTGESAQTSP.

Belongs to the archaeal DnaG primase family. In terms of assembly, forms a ternary complex with MCM helicase and DNA. Component of the archaeal exosome complex. Mg(2+) serves as cofactor.

It catalyses the reaction ssDNA + n NTP = ssDNA/pppN(pN)n-1 hybrid + (n-1) diphosphate.. Its function is as follows. RNA polymerase that catalyzes the synthesis of short RNA molecules used as primers for DNA polymerase during DNA replication. Also part of the exosome, which is a complex involved in RNA degradation. Acts as a poly(A)-binding protein that enhances the interaction between heteromeric, adenine-rich transcripts and the exosome. The polypeptide is DNA primase DnaG (Thermofilum pendens (strain DSM 2475 / Hrk 5)).